Here is a 1410-residue protein sequence, read N- to C-terminus: Condensin-1 complex subunit CAP-D2 (1410 aa).

Positions 469–480 (LEPTEHASKEST) are enriched in basic and acidic residues. Disordered regions lie at residues 469 to 492 (LEPT…DGEI), 504 to 525 (HQDS…EKDV), 860 to 879 (KTKK…NLEA), and 1208 to 1410 (KEQE…GSRS). The span at 869-879 (ESQNTEENLEA) shows a compositional bias: polar residues. A compositionally biased stretch (basic and acidic residues) spans 1208-1226 (KEQEETARNAEVHREKTKT). Composition is skewed to acidic residues over residues 1240-1284 (PVEE…EEPD) and 1306-1319 (IETE…DSEP). A compositionally biased stretch (polar residues) spans 1323–1339 (QCGTTNPRSLNRKTSGD). Residues 1342–1365 (IETESEEEQSDSEEEPSDSEEEPD) show a composition bias toward acidic residues. Residues 1368–1379 (QCGTTNPRSLNQ) show a composition bias toward polar residues.

This sequence belongs to the CND1 (condensin subunit 1) family. In terms of assembly, component of the condensin complex. Present in buds.

It localises to the chromosome. The protein localises to the nucleus. In terms of biological role, essential protein. Regulatory subunit of the condensin complex, a complex required for conversion of interphase chromatin into mitotic-like condense chromosomes. The condensin complex probably introduces positive supercoils into relaxed DNA in the presence of type I topoisomerases and converts nicked DNA into positive knotted forms in the presence of type II topoisomerases. Required for fertility, growth and euchromatin organization, but not for sister chromatid cohesion. Necessary to maintain normal structural integrity of the meiotic chromosomes during the two nuclear divisions of gametogenesis, especially to maintain compaction of the centromeric repeats and 45S rDNA. Also seems to be involved in crossover formation during meiotic prophase I. Prevents centromeric and pericentromeric heterochromatin repeats association. Contributes to the induction of stress-responsive genes in response to stress treatment. In Arabidopsis thaliana (Mouse-ear cress), this protein is Condensin-1 complex subunit CAP-D2.